A 342-amino-acid chain; its full sequence is Ketol-acid reductoisomerase (NADP(+)) (342 aa).

Residues 2-182 (AKIYYDDDAD…GGLRAGGIET (181 aa)) enclose the KARI N-terminal Rossmann domain. NADP(+) is bound by residues 25 to 28 (YGSQ), R48, S51, S53, and 83 to 86 (DQNQ). Residue H108 is part of the active site. NADP(+) is bound at residue G134. One can recognise a KARI C-terminal knotted domain in the interval 183–328 (SFREETETDL…KELRKMYSWL (146 aa)). Residues D191, E195, E227, and E231 each contribute to the Mg(2+) site. S252 is a binding site for substrate.

It belongs to the ketol-acid reductoisomerase family. Requires Mg(2+) as cofactor.

The enzyme catalyses (2R)-2,3-dihydroxy-3-methylbutanoate + NADP(+) = (2S)-2-acetolactate + NADPH + H(+). It carries out the reaction (2R,3R)-2,3-dihydroxy-3-methylpentanoate + NADP(+) = (S)-2-ethyl-2-hydroxy-3-oxobutanoate + NADPH + H(+). The protein operates within amino-acid biosynthesis; L-isoleucine biosynthesis; L-isoleucine from 2-oxobutanoate: step 2/4. It functions in the pathway amino-acid biosynthesis; L-valine biosynthesis; L-valine from pyruvate: step 2/4. Functionally, involved in the biosynthesis of branched-chain amino acids (BCAA). Catalyzes an alkyl-migration followed by a ketol-acid reduction of (S)-2-acetolactate (S2AL) to yield (R)-2,3-dihydroxy-isovalerate. In the isomerase reaction, S2AL is rearranged via a Mg-dependent methyl migration to produce 3-hydroxy-3-methyl-2-ketobutyrate (HMKB). In the reductase reaction, this 2-ketoacid undergoes a metal-dependent reduction by NADPH to yield (R)-2,3-dihydroxy-isovalerate. The polypeptide is Ketol-acid reductoisomerase (NADP(+)) (Cutibacterium acnes (strain DSM 16379 / KPA171202) (Propionibacterium acnes)).